The chain runs to 858 residues: DNA mismatch repair protein MutS (858 aa).

Glycine 637–serine 644 is a binding site for ATP.

Belongs to the DNA mismatch repair MutS family.

This protein is involved in the repair of mismatches in DNA. It is possible that it carries out the mismatch recognition step. This protein has a weak ATPase activity. This is DNA mismatch repair protein MutS from Protochlamydia amoebophila (strain UWE25).